The chain runs to 319 residues: Protoheme IX farnesyltransferase (319 aa).

8 helical membrane-spanning segments follow: residues 59-79, 108-128, 131-151, 158-178, 183-203, 232-252, 254-274, and 299-319; these read IGLI…AGAF, EALV…WFGA, LSAW…TIIL, NIVW…AAVT, WPAI…YWPL, VVLY…AGGA, WVYT…SHAL, and LTLL…VIGG.

This sequence belongs to the UbiA prenyltransferase family. Protoheme IX farnesyltransferase subfamily.

It localises to the cell membrane. The enzyme catalyses heme b + (2E,6E)-farnesyl diphosphate + H2O = Fe(II)-heme o + diphosphate. It functions in the pathway porphyrin-containing compound metabolism; heme O biosynthesis; heme O from protoheme: step 1/1. Functionally, converts heme B (protoheme IX) to heme O by substitution of the vinyl group on carbon 2 of heme B porphyrin ring with a hydroxyethyl farnesyl side group. This is Protoheme IX farnesyltransferase from Pseudarthrobacter chlorophenolicus (strain ATCC 700700 / DSM 12829 / CIP 107037 / JCM 12360 / KCTC 9906 / NCIMB 13794 / A6) (Arthrobacter chlorophenolicus).